The chain runs to 566 residues: Malate synthase, glyoxysomal (566 aa).

Arg179 functions as the Proton acceptor in the catalytic mechanism. The active-site Proton donor is Asp465. The Microbody targeting signal motif lies at 564–566; the sequence is SRL.

This sequence belongs to the malate synthase family.

It is found in the glyoxysome. It catalyses the reaction glyoxylate + acetyl-CoA + H2O = (S)-malate + CoA + H(+). Its pathway is carbohydrate metabolism; glyoxylate cycle; (S)-malate from isocitrate: step 2/2. This Raphanus sativus (Radish) protein is Malate synthase, glyoxysomal (MLS).